Consider the following 421-residue polypeptide: Histidine--tRNA ligase (421 aa).

The protein belongs to the class-II aminoacyl-tRNA synthetase family. In terms of assembly, homodimer.

The protein resides in the cytoplasm. It catalyses the reaction tRNA(His) + L-histidine + ATP = L-histidyl-tRNA(His) + AMP + diphosphate + H(+). The chain is Histidine--tRNA ligase from Nitrosomonas eutropha (strain DSM 101675 / C91 / Nm57).